The sequence spans 307 residues: Recombination-associated protein RdgC (307 aa).

The protein belongs to the RdgC family.

It localises to the cytoplasm. The protein resides in the nucleoid. May be involved in recombination. The protein is Recombination-associated protein RdgC of Burkholderia orbicola (strain MC0-3).